We begin with the raw amino-acid sequence, 122 residues long: Small ribosomal subunit protein uS13 (122 aa).

Residues 97 to 122 (PVRGQRTHTNARTRKGPARAIAGKKK) are disordered.

It belongs to the universal ribosomal protein uS13 family. Part of the 30S ribosomal subunit. Forms a loose heterodimer with protein S19. Forms two bridges to the 50S subunit in the 70S ribosome.

Located at the top of the head of the 30S subunit, it contacts several helices of the 16S rRNA. In the 70S ribosome it contacts the 23S rRNA (bridge B1a) and protein L5 of the 50S subunit (bridge B1b), connecting the 2 subunits; these bridges are implicated in subunit movement. Contacts the tRNAs in the A and P-sites. The chain is Small ribosomal subunit protein uS13 from Bartonella bacilliformis (strain ATCC 35685 / KC583 / Herrer 020/F12,63).